The chain runs to 286 residues: Phosphatidylserine decarboxylase proenzyme (286 aa).

Residues D90, H147, and S252 each act as charge relay system; for autoendoproteolytic cleavage activity in the active site. S252 functions as the Schiff-base intermediate with substrate; via pyruvic acid; for decarboxylase activity in the catalytic mechanism. Pyruvic acid (Ser); by autocatalysis is present on S252.

It belongs to the phosphatidylserine decarboxylase family. PSD-B subfamily. Prokaryotic type I sub-subfamily. Heterodimer of a large membrane-associated beta subunit and a small pyruvoyl-containing alpha subunit. It depends on pyruvate as a cofactor. Is synthesized initially as an inactive proenzyme. Formation of the active enzyme involves a self-maturation process in which the active site pyruvoyl group is generated from an internal serine residue via an autocatalytic post-translational modification. Two non-identical subunits are generated from the proenzyme in this reaction, and the pyruvate is formed at the N-terminus of the alpha chain, which is derived from the carboxyl end of the proenzyme. The autoendoproteolytic cleavage occurs by a canonical serine protease mechanism, in which the side chain hydroxyl group of the serine supplies its oxygen atom to form the C-terminus of the beta chain, while the remainder of the serine residue undergoes an oxidative deamination to produce ammonia and the pyruvoyl prosthetic group on the alpha chain. During this reaction, the Ser that is part of the protease active site of the proenzyme becomes the pyruvoyl prosthetic group, which constitutes an essential element of the active site of the mature decarboxylase.

It is found in the cell membrane. The catalysed reaction is a 1,2-diacyl-sn-glycero-3-phospho-L-serine + H(+) = a 1,2-diacyl-sn-glycero-3-phosphoethanolamine + CO2. The protein operates within phospholipid metabolism; phosphatidylethanolamine biosynthesis; phosphatidylethanolamine from CDP-diacylglycerol: step 2/2. Catalyzes the formation of phosphatidylethanolamine (PtdEtn) from phosphatidylserine (PtdSer). This chain is Phosphatidylserine decarboxylase proenzyme, found in Ectopseudomonas mendocina (strain ymp) (Pseudomonas mendocina).